The chain runs to 1460 residues: Centrosomal protein of 164 kDa (1460 aa).

Residues 1-194 are interaction with ATRIP; that stretch reads MAGRPLRIGD…PSQGLKTSAY (194 aa). The WW domain maps to 56-89; sequence APLPGEWKPCQDITGDIYYFNFANGQSMWDHPCD. Residues 107–135 form a disordered region; sequence GAIKKKKKKKEKKDKKDRDPPKSSLALGS. The span at 109–119 shows a compositional bias: basic residues; it reads IKKKKKKKEKK. S186 is modified (phosphoserine; by ATR and ATM). S201 bears the Phosphoserine mark. Disordered stretches follow at residues 213–412, 440–593, and 658–719; these read GLGE…HGLD, AQQP…AALK, and EEAR…QKNR. Acidic residues predominate over residues 217-227; that stretch reads ETNEEDEEESD. Positions 256–270 are enriched in basic and acidic residues; that stretch reads ESLRTSQPEEKKDVS. Residues 285-296 are compositionally biased toward low complexity; it reads SSPGADSSLSSA. Composition is skewed to basic and acidic residues over residues 310–323 and 357–367; these read LPEKEENEKSEPKI and EGSRREEAAKE. Residues 453–464 are compositionally biased toward low complexity; sequence QSSQDELQSKQS. Residues 465–481 show a composition bias toward basic and acidic residues; sequence KGLEERLSPPLPHEERA. The segment covering 514-525 has biased composition (low complexity); the sequence is SAASLSLQLSLQ. Positions 537 to 546 are enriched in basic and acidic residues; it reads EKGKEQHSQA. S566 carries the post-translational modification Phosphoserine. Composition is skewed to basic and acidic residues over residues 658–668 and 686–719; these read EEARMREEESQ and DQIRAEQEASLQKLREELESQQKAERASLEQKNR. Residues 1154 to 1206 adopt a coiled-coil conformation; that stretch reads GIKALEDMRKNLEKETRHLDEMKSAMRKGHNLLKKKEEKLNQLESSLWEEASD. Residues 1290 to 1310 are disordered; sequence PPPLLASMPAQLPPRDPKSTP. Phosphoserine occurs at positions 1386, 1388, and 1443.

In terms of assembly, interacts (via N-terminus) with ATRIP. Interacts with ATM, ATR and MDC1. Interacts with XPA (via N-terminus) upon UV irradiation. Interacts with CEP83, CCDC92, TTBK2, DVL3, NPHP3 and weakly with NPHP4. Interacts with DZIP1. In terms of processing, phosphorylation at Ser-186 is induced upon DNA-damage caused by treatment with IR irradiation, UV irradiation, hydroxyurea or amphidicolin. Also MDC1-mediated chromatin remodeling is critical for DNA damage-induced phosphorylation. Expressed in several cell lines.

It is found in the cytoplasm. It localises to the cytoskeleton. Its subcellular location is the microtubule organizing center. The protein resides in the centrosome. The protein localises to the centriole. It is found in the nucleus. Functionally, plays a role in microtubule organization and/or maintenance for the formation of primary cilia (PC), a microtubule-based structure that protrudes from the surface of epithelial cells. Plays a critical role in G2/M checkpoint and nuclear divisions. A key player in the DNA damage-activated ATR/ATM signaling cascade since it is required for the proper phosphorylation of H2AX, RPA, CHEK2 and CHEK1. Plays a critical role in chromosome segregation, acting as a mediator required for the maintenance of genomic stability through modulation of MDC1, RPA and CHEK1. The sequence is that of Centrosomal protein of 164 kDa (CEP164) from Homo sapiens (Human).